Consider the following 291-residue polypeptide: Probable 2-(5''-triphosphoribosyl)-3'-dephosphocoenzyme-A synthase (291 aa).

This sequence belongs to the CitG/MdcB family.

It catalyses the reaction 3'-dephospho-CoA + ATP = 2'-(5''-triphospho-alpha-D-ribosyl)-3'-dephospho-CoA + adenine. Its function is as follows. Involved in the formation of 2-(5''-phosphoribosyl)-3'-dephosphocoenzyme-A, the prosthetic group of the acyl-carrier protein of the malonate decarboxylase. The chain is Probable 2-(5''-triphosphoribosyl)-3'-dephosphocoenzyme-A synthase from Pseudomonas syringae pv. syringae (strain B728a).